A 135-amino-acid chain; its full sequence is Transcriptional activator protein (135 aa).

The Nuclear localization signal signature appears at 17–32 (KVTHRQVKKRAIRRRR). The segment at 37–54 (CGCSYYLHINCFNHGFTH) is a zinc-finger region. A compositionally biased stretch (polar residues) spans 77–88 (VFHNHQAPTTTI). The interval 77-117 (VFHNHQAPTTTIPAEPGHHNSPGSIQSQPEEGAGDSQMFSQ) is disordered. The segment at 120–135 (DLDNLTASDWSFLKGL) is transactivation.

The protein belongs to the geminiviridae transcriptional activator protein family. In terms of assembly, monomer. Homodimer. Homooligomer. Self-interaction correlates with nuclear localization and efficient activation of transcription. Monomers suppress local silencing by interacting with and inactivating host adenosine kinase 2 (ADK2) in the cytoplasm. Interacts with and inhibits host SNF1 kinase. Binds to ssDNA. Phosphorylated.

It localises to the host nucleus. Its subcellular location is the host cytoplasm. Functionally, strong activator of the late viral genes promoters. Enhances the expression of the capsid protein and nuclear shuttle protein. Acts as a suppressor of RNA-mediated gene silencing, also known as post-transcriptional gene silencing (PTGS), a mechanism of plant viral defense that limits the accumulation of viral RNAs. Suppresses the host RNA silencing by inhibiting adenosine kinase 2 (ADK2), a kinase involved in a general methylation pathway. Also suppresses the host basal defense by interacting with and inhibiting SNF1 kinase, a key regulator of cell metabolism implicated in innate antiviral defense. Determines pathogenicity. This chain is Transcriptional activator protein, found in Hewittia sublobata (Coralbush).